Consider the following 328-residue polypeptide: E3 ubiquitin-protein ligase RING1-like (328 aa).

Serine 2 is subject to N-acetylserine. Residues 216-257 (CAVCMDEFEDGSDVKQMPCKHVFHQDCLLPWLELHNSCPVCR) form an RING-type; atypical zinc finger. The disordered stretch occupies residues 264–328 (DPDYENRSQG…NLETRGEDLD (65 aa)). Positions 306–319 (SGSGSGAPGTGGGN) are enriched in gly residues.

Auto-ubiquitinated as part of the enzymatic reaction. In terms of tissue distribution, expressed in leaves, roots, trichomes, stipules, and also in anthers and stigma of flowers.

It carries out the reaction S-ubiquitinyl-[E2 ubiquitin-conjugating enzyme]-L-cysteine + [acceptor protein]-L-lysine = [E2 ubiquitin-conjugating enzyme]-L-cysteine + N(6)-ubiquitinyl-[acceptor protein]-L-lysine.. It functions in the pathway protein modification; protein ubiquitination. In terms of biological role, E3 ubiquitin-protein ligase which accepts ubiquitin from an E2 ubiquitin-conjugating enzyme in the form of a thioester and then directly transfers the ubiquitin to targeted substrates. Promotes polyubiquitination of target proteins. This is E3 ubiquitin-protein ligase RING1-like from Arabidopsis thaliana (Mouse-ear cress).